Here is a 508-residue protein sequence, read N- to C-terminus: Alpha-amylase (508 aa).

Positions 1–19 (MLSLIIAACCVTVALAGTF) are cleaved as a signal peptide. A disulfide bridge links Cys-46 with Cys-102. Ca(2+)-binding residues include Asn-116, Arg-173, and Asp-182. A disulfide bond links Cys-156 and Cys-175. Arg-210 contributes to the chloride binding site. Asp-212 (nucleophile) is an active-site residue. Residue His-216 coordinates Ca(2+). The active-site Proton donor is the Glu-248. 2 residues coordinate chloride: Asn-311 and Arg-349. Disulfide bonds link Cys-383-Cys-389 and Cys-455-Cys-467.

It belongs to the glycosyl hydrolase 13 family. As to quaternary structure, monomer. It depends on Ca(2+) as a cofactor. The cofactor is chloride.

The catalysed reaction is Endohydrolysis of (1-&gt;4)-alpha-D-glucosidic linkages in polysaccharides containing three or more (1-&gt;4)-alpha-linked D-glucose units.. This chain is Alpha-amylase, found in Pecten maximus (King scallop).